The chain runs to 306 residues: Mitochondrial brown fat uncoupling protein 1 (306 aa).

Residues 1–10 (MVGTTATDVA) are Mitochondrial intermembrane-facing. A helical transmembrane segment spans residues 11–32 (PTMGVKIFSAGVAACLADVITF). Solcar repeat units follow at residues 11–102 (PTMG…VQEF), 110–200 (PSLR…MKGA), and 209–294 (DDVP…LKRE). Over 33-73 (PLDTAKVRLQIQGECQTTSGIRYKGVLGTITTLAKTEGPLK) the chain is Mitochondrial matrix. Position 56 (Lys-56) interacts with fatty acid 16:0. A helical transmembrane segment spans residues 74 to 96 (LYSGLPAGLQRQISFASLRIGLY). Over 97–115 (DTVQEFWGGEEATPSLRSK) the chain is Mitochondrial intermembrane. Residues 116–132 (ICAGLTTGGVAVFIGQP) form a helical membrane-spanning segment. The Mitochondrial matrix segment spans residues 133–177 (TEVVKVRLQAQSHLHGLKPRYTGTYNAYRIIATTESLSTLWKGTT). The helical transmembrane segment at 178 to 194 (PNLLRNIIINCTELVTY) threads the bilayer. At 195-211 (DLMKGALVRNDILADDV) the chain is on the mitochondrial intermembrane side. A helical membrane pass occupies residues 212-231 (PCHLLSALIAGFCTTLLSSP). Over 232–265 (VDVVKTRFINSPQGQYTSVPSCAMSMLTKEGPTA) the chain is Mitochondrial matrix. Cysteine sulfenic acid (-SOH) is present on Cys-253. A helical membrane pass occupies residues 266-288 (FFKGFAPSFLRLASWNVIMFVCF). Residue Lys-268 participates in fatty acid 16:0 binding. Residues 289–306 (EKLKRELMKSRQTVDCAT) lie on the Mitochondrial intermembrane side of the membrane.

This sequence belongs to the mitochondrial carrier (TC 2.A.29) family. As to quaternary structure, most probably functions as a monomer. Binds one purine nucleotide per monomer. However, has also been suggested to function as a homodimer or a homotetramer. Tightly associates with cardiolipin in the mitochondrion inner membrane; may stabilize and regulate its activity. In terms of processing, may undergo sulfenylation upon cold exposure. May increase the sensitivity of UCP1 thermogenic function to the activation by noradrenaline probably through structural effects. Post-translationally, may undergo ubiquitin-mediated proteasomal degradation.

It is found in the mitochondrion inner membrane. The enzyme catalyses H(+)(in) = H(+)(out). Its activity is regulated as follows. Has no constitutive proton transporter activity and has to be activated by long-chain fatty acids/LCFAs. Inhibited by purine nucleotides. Both purine nucleotides and LCFAs bind the cytosolic side of the transporter and directly compete to activate or inhibit it. Activated by noradrenaline and reactive oxygen species. Despite lacking canonical translational encoding for selenocysteine, a small pool of the protein has been observed to selectively incorporate selenocysteine at 'Cys-253'. Selenocysteine-modified protein is highly sensitive to redox modification and may constitute a pool of protein highly sensitive to activation by elevated levels of reactive oxygen species (ROS). Functionally, mitochondrial protein responsible for thermogenic respiration, a specialized capacity of brown adipose tissue and beige fat that participates in non-shivering adaptive thermogenesis to temperature and diet variations and more generally to the regulation of energy balance. Functions as a long-chain fatty acid/LCFA and proton symporter, simultaneously transporting one LCFA and one proton through the inner mitochondrial membrane. However, LCFAs remaining associated with the transporter via their hydrophobic tails, it results in an apparent transport of protons activated by LCFAs. Thereby, dissipates the mitochondrial proton gradient and converts the energy of substrate oxydation into heat instead of ATP. Regulates the production of reactive oxygen species/ROS by mitochondria. The sequence is that of Mitochondrial brown fat uncoupling protein 1 from Ochotona dauurica (Daurian pika).